The chain runs to 221 residues: uncharacterized protein (221 aa).

It to E.coli YheO.

This is an uncharacterized protein from Haemophilus influenzae (strain ATCC 51907 / DSM 11121 / KW20 / Rd).